The chain runs to 199 residues: Holliday junction resolvase RecU (199 aa).

The Mg(2+) site is built by T82, D84, E97, and Q116.

It belongs to the RecU family. The cofactor is Mg(2+).

It localises to the cytoplasm. It catalyses the reaction Endonucleolytic cleavage at a junction such as a reciprocal single-stranded crossover between two homologous DNA duplexes (Holliday junction).. Its function is as follows. Endonuclease that resolves Holliday junction intermediates in genetic recombination. Cleaves mobile four-strand junctions by introducing symmetrical nicks in paired strands. Promotes annealing of linear ssDNA with homologous dsDNA. Required for DNA repair, homologous recombination and chromosome segregation. The polypeptide is Holliday junction resolvase RecU (Streptococcus pyogenes serotype M1).